We begin with the raw amino-acid sequence, 247 residues long: 5'-nucleotidase SurE (247 aa).

A divalent metal cation is bound by residues Asp8, Asp9, Ser39, and Asn91.

The protein belongs to the SurE nucleotidase family. The cofactor is a divalent metal cation.

Its subcellular location is the cytoplasm. The catalysed reaction is a ribonucleoside 5'-phosphate + H2O = a ribonucleoside + phosphate. In terms of biological role, nucleotidase that shows phosphatase activity on nucleoside 5'-monophosphates. The chain is 5'-nucleotidase SurE from Methylobacillus flagellatus (strain ATCC 51484 / DSM 6875 / VKM B-1610 / KT).